The sequence spans 413 residues: Dolichyl-diphosphooligosaccharide--protein glycosyltransferase 48 kDa subunit (413 aa).

The Lumenal portion of the chain corresponds to 1–383; sequence GPRSLVLLEN…QYERFIPSAY (383 aa). A helical membrane pass occupies residues 384–404; that stretch reads PYYAGAFSMMVGLFMFSIVFL. Topologically, residues 405–413 are cytoplasmic; it reads HMKEKEKSD.

The protein belongs to the DDOST 48 kDa subunit family. In terms of assembly, component of the oligosaccharyltransferase (OST) complex.

The protein localises to the endoplasmic reticulum. Its subcellular location is the endoplasmic reticulum membrane. The protein operates within protein modification; protein glycosylation. In terms of biological role, subunit of the oligosaccharyl transferase (OST) complex that catalyzes the initial transfer of a defined glycan (Glc(3)Man(9)GlcNAc(2) in eukaryotes) from the lipid carrier dolichol-pyrophosphate to an asparagine residue within an Asn-X-Ser/Thr consensus motif in nascent polypeptide chains, the first step in protein N-glycosylation. N-glycosylation occurs cotranslationally and the complex associates with the Sec61 complex at the channel-forming translocon complex that mediates protein translocation across the endoplasmic reticulum (ER). All subunits are required for a maximal enzyme activity. Required for the assembly of both SST3A- and SS3B-containing OST complexes. The polypeptide is Dolichyl-diphosphooligosaccharide--protein glycosyltransferase 48 kDa subunit (Gallus gallus (Chicken)).